Consider the following 485-residue polypeptide: MSVLLETSAGDIVIDLLVDHAPKLCENFLKLCKVKYYNFSPVHSVQKNFSFQTGDPLGPLSKDSDGGSSIWGHLSGDPSERTFPAFFHPKLKHLERGTVSMATAPLQSDPDVRVAGSQFIITLGQDTDFLDGKAAIFGKVVEGFEALDKINEAIVDEKGHPLIDIRIKHTVILDDPYADPPGLREPSTSPPPTDQQLKTVRIADEAALHEDDNVDEEELERRRRNREAQAQALTLEMMGDLPFAEVKPPENVLFVCKLNPVTGDEDLELIFGRFGKILSCEVIRDQKTGDSLQYAFIEYEDKASCEAAYFKMQGVLIDDRRIHVDFSQSVSKLSDVWRKDTNSKRRTNAGRGGWGGVDELEKRRQYRDEGERVTGGNYRMVYGEEEMKGKVGRNAPKQDKDDGPPPPGPRDNGEPSRQQNRSRSPRPRDRSRDRYHKPRDDRRGDRRDRDRRDQDRNRYRDRDHRDRGREKDRYGRDENDRRSRR.

The PPIase cyclophilin-type domain maps to 1–172; it reads MSVLLETSAG…IDIRIKHTVI (172 aa). The RRM domain occupies 251 to 329; it reads NVLFVCKLNP…RRIHVDFSQS (79 aa). A disordered region spans residues 377 to 485; sequence NYRMVYGEEE…RDENDRRSRR (109 aa). Positions 426 to 485 are enriched in basic and acidic residues; it reads RPRDRSRDRYHKPRDDRRGDRRDRDRRDQDRNRYRDRDHRDRGREKDRYGRDENDRRSRR.

It belongs to the cyclophilin-type PPIase family. PPIL4 subfamily.

It localises to the nucleus. The catalysed reaction is [protein]-peptidylproline (omega=180) = [protein]-peptidylproline (omega=0). In terms of biological role, PPIases accelerate the folding of proteins. It catalyzes the cis-trans isomerization of proline imidic peptide bonds in oligopeptides. The protein is Peptidyl-prolyl cis-trans isomerase-like 4 (CYP6) of Gibberella zeae (strain ATCC MYA-4620 / CBS 123657 / FGSC 9075 / NRRL 31084 / PH-1) (Wheat head blight fungus).